Reading from the N-terminus, the 705-residue chain is Putative membrane protein SCO6666 (705 aa).

13 helical membrane-spanning segments follow: residues 16 to 36 (VMLLWGLFLLLGFGLGTGVFG), 144 to 164 (LHGIDGSAVSGVHVSGGPLLG), 177 to 197 (NAELISLPVVLVLLLVVFGGL), 201 to 221 (GLPLLVAVAGIAGAFLALFGF), 232 to 252 (IQVTTMLGLGLAVDYALLMLV), 280 to 300 (LFSGLTVAVSLAGLLVFPSTF), 306 to 326 (LAVAAVVVVDMLAALTLLPAL), 360 to 380 (VAVLAVAVPALLVVALPVTGM), 504 to 524 (ALTVLTGIFVLLFAFTGSVLL), 528 to 548 (TVATTLLSLGAALGAVVWVFQ), 561 to 581 (LGALSLTAPPLIIAIAFGLAM), 615 to 635 (VVTCAALLLAVVFGAFMTGGF), and 636 to 656 (SPILQIGLGLTLAVLIDATVV).

This sequence belongs to the resistance-nodulation-cell division (RND) (TC 2.A.6) family. MmpL subfamily.

It localises to the cell membrane. This Streptomyces coelicolor (strain ATCC BAA-471 / A3(2) / M145) protein is Putative membrane protein SCO6666.